A 373-amino-acid polypeptide reads, in one-letter code: Alginate lyase (373 aa).

The signal sequence occupies residues 1–25 (MRLPMQKLLIPTLLGLAMFAGSVNA). Substrate is bound by residues 66–67 (SK), 139–140 (HT), and tyrosine 257.

It belongs to the polysaccharide lyase 5 family.

The protein localises to the periplasm. It carries out the reaction Eliminative cleavage of alginate to give oligosaccharides with 4-deoxy-alpha-L-erythro-hex-4-enuronosyl groups at their non-reducing ends and beta-D-mannuronate at their reducing end.. Catalyzes the depolymerization of alginate by cleaving the beta-1,4 glycosidic bond between two adjacent sugar residues via a beta-elimination mechanism. May serve to degrade mislocalized alginate that is trapped in the periplasmic space. The sequence is that of Alginate lyase from Pseudomonas fluorescens.